The following is a 295-amino-acid chain: Ankyrin repeat and SOCS box protein 17 (295 aa).

The stretch at 146–176 is one ANK repeat; the sequence is SGITPLLYVAQTRQSNILKILLQYGILEREN. One can recognise an SOCS box domain in the interval 232 to 295; sequence LGRRPIISNW…CLQNYLNLES (64 aa).

This sequence belongs to the ankyrin SOCS box (ASB) family.

It functions in the pathway protein modification; protein ubiquitination. Functionally, may be a substrate-recognition component of a SCF-like ECS (Elongin-Cullin-SOCS-box protein) E3 ubiquitin-protein ligase complex which mediates the ubiquitination and subsequent proteasomal degradation of target proteins. This is Ankyrin repeat and SOCS box protein 17 (ASB17) from Bos taurus (Bovine).